The following is a 296-amino-acid chain: UBX domain-containing protein 1-A (296 aa).

The 42-residue stretch at 1 to 42 (MAECSTLESLIEMGFSSTRAEKALTATGNQGIEPAMDWLVEH) folds into the UBA domain. Residues 43–216 (EDDPDIDEPS…VQEPPTKKEY (174 aa)) form a disordered region. A compositionally biased stretch (low complexity) spans 61–75 (TDTADTTDTTDTTDT). Basic and acidic residues-rich tracts occupy residues 86-100 (PLTE…KRMM), 107-123 (QNER…EQEK), and 138-178 (KMQE…DRAR). Residues 87-177 (LTEEEKEKQT…KIARDKADRA (91 aa)) are a coiled coil. Low complexity predominate over residues 191–206 (PAETSIPATTPSPSSP). A UBX domain is found at 214-293 (KEYDQCRIQV…GLVPTAVLIV (80 aa)).

It localises to the cytoplasm. Its function is as follows. Component of a complex required to couple deglycosylation and proteasome-mediated degradation of misfolded proteins in the endoplasmic reticulum that are retrotranslocated in the cytosol. Involved in ubiquitin-proteasome systems. The polypeptide is UBX domain-containing protein 1-A (ubxn1-a) (Xenopus laevis (African clawed frog)).